Here is a 504-residue protein sequence, read N- to C-terminus: Maturase K (504 aa).

This sequence belongs to the intron maturase 2 family. MatK subfamily.

It localises to the plastid. The protein resides in the chloroplast. Usually encoded in the trnK tRNA gene intron. Probably assists in splicing its own and other chloroplast group II introns. In Rorippa amphibia (Great yellow-cress), this protein is Maturase K.